An 85-amino-acid chain; its full sequence is MAHKKAGGSTKNGRDSESKRLGVKRFGGESVLAGNILVRQRGTKFHAGANVGIGKDHTLFATSEGKVSFDVKGSKNRKFVSVITD.

Residues 1–22 (MAHKKAGGSTKNGRDSESKRLG) form a disordered region.

Belongs to the bacterial ribosomal protein bL27 family.

The polypeptide is Large ribosomal subunit protein bL27 (Idiomarina loihiensis (strain ATCC BAA-735 / DSM 15497 / L2-TR)).